Consider the following 140-residue polypeptide: uncharacterized protein (140 aa).

The HTH cro/C1-type domain occupies 26 to 80; sequence IRSQRETAHVSMRQLAERSGVSNPYLSQVERGLRKPSADVLSQIAKALRVSAEVL. The H-T-H motif DNA-binding region spans 37 to 56; sequence MRQLAERSGVSNPYLSQVER.

This is an uncharacterized protein from Mycobacterium tuberculosis (strain ATCC 25618 / H37Rv).